Reading from the N-terminus, the 61-residue chain is UPF0434 protein Avin_14770 (61 aa).

The protein belongs to the UPF0434 family.

In Azotobacter vinelandii (strain DJ / ATCC BAA-1303), this protein is UPF0434 protein Avin_14770.